The chain runs to 142 residues: Large ribosomal subunit protein uL13 (142 aa).

It belongs to the universal ribosomal protein uL13 family. Part of the 50S ribosomal subunit.

Its function is as follows. This protein is one of the early assembly proteins of the 50S ribosomal subunit, although it is not seen to bind rRNA by itself. It is important during the early stages of 50S assembly. This is Large ribosomal subunit protein uL13 from Acholeplasma laidlawii (strain PG-8A).